Consider the following 290-residue polypeptide: Sodium/potassium-transporting ATPase subunit beta-2 (290 aa).

Over 1 to 39 (MVIQKEKKSCGQVVEEWKEFVWNPRTHQFMGRTGTSWAF) the chain is Cytoplasmic. The chain crosses the membrane as a helical; Signal-anchor for type II membrane protein span at residues 40-67 (ILLFYLVFYGFLTAMFTLTMWVMLQTVS). Residues 68 to 290 (DHTPKYQDRL…VAFKLRINKA (223 aa)) lie on the Extracellular side of the membrane. Asn-96 and Asn-118 each carry an N-linked (GlcNAc...) asparagine glycan. Residues Cys-129 and Cys-150 are joined by a disulfide bond. Residues Asn-153 and Asn-159 are each glycosylated (N-linked (GlcNAc...) asparagine). Cys-160 and Cys-177 are oxidised to a cystine. Residues Asn-193, Asn-197, and Asn-238 are each glycosylated (N-linked (GlcNAc...) asparagine). Residues 193-290 (NQSMNVTCVG…VAFKLRINKA (98 aa)) form an immunoglobulin-like region. The cysteines at positions 200 and 261 are disulfide-linked.

The protein belongs to the X(+)/potassium ATPases subunit beta family. The sodium/potassium-transporting ATPase is composed of a catalytic alpha subunit, an auxiliary non-catalytic beta subunit and an additional regulatory subunit. Interacts with isoform 2 of BSG. As to expression, highly expressed in brain (at protein level).

The protein localises to the cell membrane. Functionally, this is the non-catalytic component of the active enzyme, which catalyzes the hydrolysis of ATP coupled with the exchange of Na(+) and K(+) ions across the plasma membrane. The exact function of the beta-2 subunit is not known. Mediates cell adhesion of neurons and astrocytes, and promotes neurite outgrowth. The protein is Sodium/potassium-transporting ATPase subunit beta-2 (Atp1b2) of Rattus norvegicus (Rat).